The chain runs to 1009 residues: Probable beta-galactosidase B (1009 aa).

Residues 1–21 (MAQLFTKIIVYFLLFASPLLA) form the signal peptide. Asn28 carries an N-linked (GlcNAc...) asparagine glycan. Tyr85 contributes to the substrate binding site. Asn95 carries N-linked (GlcNAc...) asparagine glycosylation. Substrate is bound by residues Asn130, Ala131, Glu132, and Asn190. Glu191 (proton donor) is an active-site residue. The N-linked (GlcNAc...) asparagine glycan is linked to Asn247. Position 260 (Tyr260) interacts with substrate. Cysteines 266 and 319 form a disulfide. Residue Glu303 is the Nucleophile of the active site. Tyr368 provides a ligand contact to substrate. Residues Asn375, Asn406, Asn427, Asn451, Asn682, Asn740, Asn771, Asn784, Asn826, and Asn883 are each glycosylated (N-linked (GlcNAc...) asparagine).

This sequence belongs to the glycosyl hydrolase 35 family.

It is found in the secreted. It catalyses the reaction Hydrolysis of terminal non-reducing beta-D-galactose residues in beta-D-galactosides.. In terms of biological role, cleaves beta-linked terminal galactosyl residues from gangliosides, glycoproteins, and glycosaminoglycans. In Talaromyces marneffei (strain ATCC 18224 / CBS 334.59 / QM 7333) (Penicillium marneffei), this protein is Probable beta-galactosidase B (lacB).